We begin with the raw amino-acid sequence, 661 residues long: WD repeat-containing protein 26 (661 aa).

Residues 1–27 are compositionally biased toward gly residues; sequence MQANGAGGGGGGGGGGGGGGGGGGGQG. 2 disordered regions span residues 1–70 and 99–118; these read MQAN…ASNN and TAAS…KKKK. Low complexity-rich tracts occupy residues 56–70 and 99–113; these read ANGL…ASNN and TAAS…LGSS. Phosphoserine occurs at positions 121 and 123. Residues 123–155 enclose the LisH domain; it reads SDEDVIRLIGQHLNGLGLNQTVDLLMQESGCRL. Positions 156–231 constitute a CTLH domain; that stretch reads EHPSATKFRN…EYLEDGKVLE (76 aa). WD repeat units lie at residues 353 to 392, 399 to 438, 444 to 484, 524 to 563, 566 to 608, and 611 to 651; these read EHCN…HLLK, GHAY…GELR, SHED…DSWE, QEDH…LVRK, GVTQ…PIAE, and GHTR…DHQN.

As to quaternary structure, forms homooligomers. Identified in the CTLH complex that contains GID4, RANBP9 and/or RANBP10, MKLN1, MAEA, RMND5A (or alternatively its paralog RMND5B), GID8, ARMC8, WDR26 and YPEL5. Within this complex, MAEA, RMND5A (or alternatively its paralog RMND5B), GID8, WDR26, and RANBP9 and/or RANBP10 form the catalytic core, while GID4, MKLN1, ARMC8 and YPEL5 have ancillary roles. Interacts with DDB1-CUL4A/B E3 ligase complexes. Forms a complex composed of at least WDR26, a G-beta:gamma unit, and PLCB2. Interacts with AXIN1. As to expression, broadly expressed, with highest levels in heart and skeletal muscle.

It localises to the cytoplasm. The protein localises to the nucleus. Its subcellular location is the mitochondrion. Its function is as follows. G-beta-like protein involved in cell signal transduction. Acts as a negative regulator in MAPK signaling pathway. Functions as a scaffolding protein to promote G beta:gamma-mediated PLCB2 plasma membrane translocation and subsequent activation in leukocytes. Core component of the CTLH E3 ubiquitin-protein ligase complex that selectively accepts ubiquitin from UBE2H and mediates ubiquitination and subsequent proteasomal degradation of the transcription factor HBP1. Acts as a negative regulator of the canonical Wnt signaling pathway through preventing ubiquitination of beta-catenin CTNNB1 by the beta-catenin destruction complex, thus negatively regulating CTNNB1 degradation. Serves as a scaffold to coordinate PI3K/AKT pathway-driven cell growth and migration. Protects cells from oxidative stress-induced apoptosis via the down-regulation of AP-1 transcriptional activity as well as by inhibiting cytochrome c release from mitochondria. Also protects cells by promoting hypoxia-mediated autophagy and mitophagy. The protein is WD repeat-containing protein 26 (WDR26) of Homo sapiens (Human).